Reading from the N-terminus, the 205-residue chain is Large ribosomal subunit protein uL3c (205 aa).

Residues 130–150 form a disordered region; that stretch reads RGPMSHGSKNHRQPGSIGAGT.

It belongs to the universal ribosomal protein uL3 family. Part of the 50S ribosomal subunit.

The protein resides in the plastid. Its subcellular location is the chloroplast. Functionally, one of the primary rRNA binding proteins, it binds directly near the 3'-end of the 23S rRNA, where it nucleates assembly of the 50S subunit. This chain is Large ribosomal subunit protein uL3c (rpl3), found in Gracilaria tenuistipitata var. liui (Red alga).